The primary structure comprises 212 residues: EFC-associated protein OPG053 (212 aa).

Residues 1–175 (MAETKEFKTL…IIENRLPYYD (175 aa)) lie on the Virion surface side of the membrane. 3 disulfide bridges follow: cysteine 33/cysteine 55, cysteine 47/cysteine 127, and cysteine 107/cysteine 149. A helical transmembrane segment spans residues 176–196 (PWFLVGVAIILVIFTVAICSI). The Intravirion segment spans residues 197–212 (RRNLALKYRYGTFLYV).

The protein belongs to the orthopoxvirus OPG053 family. In terms of assembly, component of the entry fusion complex (EFC) composed of OPG053, OPG076, OPG086, OPG094, OPG095, OPG099, OPG107, OPG143, OPG104, OPG147 and OPG155. Except for OPG095 and OPG052, each of the EFC proteins is required for assembly or stability of the complex. Post-translationally, disulfid bonds are oxidized in the cytoplasm by OPG088 protein. Unglycosylated because produced in viral factories instead of the classic ER -Golgi route.

The protein resides in the virion membrane. Functionally, component of the entry fusion complex (EFC), which consists of 11 proteins. During cell infection, this complex mediates entry of the virion core into the host cytoplasm by a two-step mechanism consisting of lipid mixing of the viral and cellular membranes and subsequent pore formation. This chain is EFC-associated protein OPG053 (OPG053), found in Monkeypox virus.